We begin with the raw amino-acid sequence, 458 residues long: Argininosuccinate lyase (458 aa).

The protein belongs to the lyase 1 family. Argininosuccinate lyase subfamily.

Its subcellular location is the cytoplasm. It carries out the reaction 2-(N(omega)-L-arginino)succinate = fumarate + L-arginine. Its pathway is amino-acid biosynthesis; L-arginine biosynthesis; L-arginine from L-ornithine and carbamoyl phosphate: step 3/3. The sequence is that of Argininosuccinate lyase from Citrifermentans bemidjiense (strain ATCC BAA-1014 / DSM 16622 / JCM 12645 / Bem) (Geobacter bemidjiensis).